Reading from the N-terminus, the 211-residue chain is Ubiquitin-conjugating enzyme E2 S (211 aa).

Residues 11 to 157 (HVIRQVYKEV…ARLMTEIHAH (147 aa)) enclose the UBC core domain. Cysteine 95 serves as the catalytic Glycyl thioester intermediate. The segment covering 157-167 (HSSSLRGKDPT) has biased composition (basic and acidic residues). The disordered stretch occupies residues 157–211 (HSSSLRGKDPTDPCSSASVTGALGDGPMAKKHAGDRDKKLAAKKKTDKKRALRRL). Basic residues predominate over residues 197–211 (AAKKKTDKKRALRRL).

Belongs to the ubiquitin-conjugating enzyme family.

The enzyme catalyses S-ubiquitinyl-[E1 ubiquitin-activating enzyme]-L-cysteine + [E2 ubiquitin-conjugating enzyme]-L-cysteine = [E1 ubiquitin-activating enzyme]-L-cysteine + S-ubiquitinyl-[E2 ubiquitin-conjugating enzyme]-L-cysteine.. It functions in the pathway protein modification; protein ubiquitination. In terms of biological role, catalyzes the covalent attachment of ubiquitin to other proteins. Acts as an essential factor of the anaphase promoting complex/cyclosome (APC/C), a cell cycle-regulated ubiquitin ligase that controls progression through mitosis. Acts by specifically elongating 'Lys-11'-linked polyubiquitin chains initiated by the E2 enzyme ube2c/ubch10 on APC/C substrates, enhancing the degradation of APC/C substrates by the proteasome and promoting mitotic exit. The polypeptide is Ubiquitin-conjugating enzyme E2 S (ube2s) (Aquarana catesbeiana (American bullfrog)).